Reading from the N-terminus, the 551-residue chain is Eukaryotic translation initiation factor 3 subunit D-2 (551 aa).

Positions 91–154 are disordered; sequence TKPYQRGRYR…RNTQNMGRRF (64 aa). Positions 95–113 are enriched in basic residues; that stretch reads QRGRYRPNMRNNVRSRGRT. The segment covering 121–136 has biased composition (low complexity); sequence ASLGGSTAGGATASTT. The interval 290 to 304 is RNA gate; that stretch reads QFDLLTVNETSVEPP. The tract at residues 527 to 551 is disordered; that stretch reads PENAFDSDGDEEEESSDPLSNSNDN. Positions 531 to 542 are enriched in acidic residues; that stretch reads FDSDGDEEEESS.

The protein belongs to the eIF-3 subunit D family. In terms of assembly, component of the eukaryotic translation initiation factor 3 (eIF-3) complex. The eIF-3 complex interacts with pix.

The protein resides in the cytoplasm. MRNA cap-binding component of the eukaryotic translation initiation factor 3 (eIF-3) complex, which is involved in protein synthesis of a specialized repertoire of mRNAs and, together with other initiation factors, stimulates binding of mRNA and methionyl-tRNAi to the 40S ribosome. The eIF-3 complex specifically targets and initiates translation of a subset of mRNAs involved in cell proliferation. In the eIF-3 complex, eif3d specifically recognizes and binds the 7-methylguanosine cap of a subset of mRNAs. This Drosophila melanogaster (Fruit fly) protein is Eukaryotic translation initiation factor 3 subunit D-2.